The primary structure comprises 598 residues: MKKIRNFCIIAHIDHGKSTLADRLLGATQTVTAREEKAQLLDNMDLERERGITIKSHAIQMEYKYKGEEYILNLIDTPGHVDFSYEVSRSIAACEGALLIVDAAQSIQAQTISNLYLALENDLEIIPVLNKVDLPSANPEEVSDDIIDLLGCKLEDIIHASGKTGFGVENILAAIIEKIPPPKGDPEEPLQALIFDSVYNPFRGIEVIFRVVNGEIKKGQKIKFMATDNEYFADEIGTLKLNQVPKNVVSAGDVGYLISGIKEAREVKVGDTITDAKVPTTNMITGFEDVKPMVFAGIYPVDTEDYEDLRSSMEKLQLNDASLVFTPESSAALGFGFRCGFLGMLHMEIIQERLEREFDMTVITTVPNVSYLAYTKKEPEKALIVNNPSDLPEPSKLDRVEEPFIKATIITKADFVGNVMSLCIEKRGLITNQTYLTTERVELNFDMPLAEIVFDFYDRLKTVSKGYASFDYSPIGMRTSKLVKLDVLLNAQTVDALSALIHEDNAYNIGKKMTEKLRELIPRQQFDIPIQAAIGAKIIARETIKALRKDVTAKCYGGDISRKRKLLEKQKKGKKRMRQVGNVEIPQEAFMAVLKLND.

Residues 2-183 (KKIRNFCIIA…AIIEKIPPPK (182 aa)) form the tr-type G domain. Residues 14–19 (DHGKST) and 130–133 (NKVD) each bind GTP.

It belongs to the TRAFAC class translation factor GTPase superfamily. Classic translation factor GTPase family. LepA subfamily.

The protein localises to the cell inner membrane. It carries out the reaction GTP + H2O = GDP + phosphate + H(+). Its function is as follows. Required for accurate and efficient protein synthesis under certain stress conditions. May act as a fidelity factor of the translation reaction, by catalyzing a one-codon backward translocation of tRNAs on improperly translocated ribosomes. Back-translocation proceeds from a post-translocation (POST) complex to a pre-translocation (PRE) complex, thus giving elongation factor G a second chance to translocate the tRNAs correctly. Binds to ribosomes in a GTP-dependent manner. The protein is Elongation factor 4 of Flavobacterium johnsoniae (strain ATCC 17061 / DSM 2064 / JCM 8514 / BCRC 14874 / CCUG 350202 / NBRC 14942 / NCIMB 11054 / UW101) (Cytophaga johnsonae).